The primary structure comprises 458 residues: tRNA modification GTPase MnmE (458 aa).

Residues Arg22, Glu84, and Arg123 each coordinate (6S)-5-formyl-5,6,7,8-tetrahydrofolate. One can recognise a TrmE-type G domain in the interval 220–379 (GIATAIIGRP…LEKAIADLFF (160 aa)). A K(+)-binding site is contributed by Asn230. GTP-binding positions include 230–235 (NVGKSS), 249–255 (TDIAGTT), and 274–277 (DTAG). Ser234 lines the Mg(2+) pocket. Residues Thr249, Ile251, and Thr254 each coordinate K(+). Thr255 provides a ligand contact to Mg(2+). Lys458 contacts (6S)-5-formyl-5,6,7,8-tetrahydrofolate.

Belongs to the TRAFAC class TrmE-Era-EngA-EngB-Septin-like GTPase superfamily. TrmE GTPase family. Homodimer. Heterotetramer of two MnmE and two MnmG subunits. K(+) is required as a cofactor.

Its subcellular location is the cytoplasm. Its function is as follows. Exhibits a very high intrinsic GTPase hydrolysis rate. Involved in the addition of a carboxymethylaminomethyl (cmnm) group at the wobble position (U34) of certain tRNAs, forming tRNA-cmnm(5)s(2)U34. The protein is tRNA modification GTPase MnmE of Bacillus anthracis.